Reading from the N-terminus, the 205-residue chain is Peptidyl-tRNA hydrolase (205 aa).

Tyrosine 14 contributes to the tRNA binding site. Residue histidine 19 is the Proton acceptor of the active site. TRNA is bound by residues tyrosine 68, asparagine 70, and asparagine 116.

Belongs to the PTH family. Monomer.

The protein resides in the cytoplasm. The enzyme catalyses an N-acyl-L-alpha-aminoacyl-tRNA + H2O = an N-acyl-L-amino acid + a tRNA + H(+). In terms of biological role, hydrolyzes ribosome-free peptidyl-tRNAs (with 1 or more amino acids incorporated), which drop off the ribosome during protein synthesis, or as a result of ribosome stalling. Its function is as follows. Catalyzes the release of premature peptidyl moieties from peptidyl-tRNA molecules trapped in stalled 50S ribosomal subunits, and thus maintains levels of free tRNAs and 50S ribosomes. In Caulobacter vibrioides (strain ATCC 19089 / CIP 103742 / CB 15) (Caulobacter crescentus), this protein is Peptidyl-tRNA hydrolase.